We begin with the raw amino-acid sequence, 261 residues long: MYTDTGLAVRVIPCLDIDAGRVVKGVNFENLRDAGDPVELAAAYDAEGADELTFLDVTASSSGRATMLEVVRHTAEQVFIPLTVGGGVRTVADVDLLLRAGADKVSVNTAAIARPDLLADMATQFGSQCIVLSVDARKVPVGSSPTPSGWEVTTHGGRRGTGIDAVEWAARGADLGVGEILLNSMDADGTKAGFDLAMLRAVRAAVTVPVIASGGAGNVDHFAPAVAAGADAVLAASVFHFRELTIGQVKAAMAAEGNTVR.

Catalysis depends on residues D16 and D135.

It belongs to the HisA/HisF family. As to quaternary structure, heterodimer of HisH and HisF.

The protein resides in the cytoplasm. It catalyses the reaction 5-[(5-phospho-1-deoxy-D-ribulos-1-ylimino)methylamino]-1-(5-phospho-beta-D-ribosyl)imidazole-4-carboxamide + L-glutamine = D-erythro-1-(imidazol-4-yl)glycerol 3-phosphate + 5-amino-1-(5-phospho-beta-D-ribosyl)imidazole-4-carboxamide + L-glutamate + H(+). The protein operates within amino-acid biosynthesis; L-histidine biosynthesis; L-histidine from 5-phospho-alpha-D-ribose 1-diphosphate: step 5/9. Functionally, IGPS catalyzes the conversion of PRFAR and glutamine to IGP, AICAR and glutamate. The HisF subunit catalyzes the cyclization activity that produces IGP and AICAR from PRFAR using the ammonia provided by the HisH subunit. This is Imidazole glycerol phosphate synthase subunit HisF from Mycobacterium ulcerans (strain Agy99).